A 423-amino-acid polypeptide reads, in one-letter code: Cytidylate cyclase (423 aa).

Positions 79–184 constitute a Guanylate cyclase domain; the sequence is CSLFVDISGS…LKIRIGIDFG (106 aa). Phe82 is a binding site for a ribonucleoside 5'-triphosphate. Residues Asp84, Ile85, and Asp128 each coordinate Mn(2+). The AGS-C domain stretch occupies residues 290–409; that stretch reads ENEQFYSPRD…ICHDSFGLFI (120 aa).

This sequence belongs to the adenylyl cyclase class-4/guanylyl cyclase family. Pyrimidine cyclase subfamily. In terms of assembly, homodimer. Mn(2+) serves as cofactor.

The protein resides in the cytoplasm. It carries out the reaction CTP = 3',5'-cyclic CMP + diphosphate. In terms of biological role, pycsar (pyrimidine cyclase system for antiphage resistance) provides immunity against bacteriophage. The pyrimidine cyclase (PycC) synthesizes cyclic nucleotides in response to infection; these serve as specific second messenger signals. The signal activates the adjacent effector, leading to bacterial cell death and abortive phage infection. A clade E Pycsar system. The pyrimidine cyclase gene of a two-gene Pycsar system, weakly generates cyclic CMP (cCMP) from CTP, has little to no activity on ATP, GTP or UTP. Expression of this and adjacent effector SaPycTM (AC P0DV39) probably confers resistance to bacteriophage. The genes are probably only expressed in response to bacteriophage infection. The polypeptide is Cytidylate cyclase (Staphylococcus aureus).